The chain runs to 596 residues: Elongation factor 4 (596 aa).

The 182-residue stretch at 2–183 folds into the tr-type G domain; sequence KNIRNFSIIA…AIVRRVPAPD (182 aa). Residues 14-19 and 130-133 each bind GTP; these read DHGKST and NKID.

This sequence belongs to the TRAFAC class translation factor GTPase superfamily. Classic translation factor GTPase family. LepA subfamily.

It is found in the cell inner membrane. The catalysed reaction is GTP + H2O = GDP + phosphate + H(+). Its function is as follows. Required for accurate and efficient protein synthesis under certain stress conditions. May act as a fidelity factor of the translation reaction, by catalyzing a one-codon backward translocation of tRNAs on improperly translocated ribosomes. Back-translocation proceeds from a post-translocation (POST) complex to a pre-translocation (PRE) complex, thus giving elongation factor G a second chance to translocate the tRNAs correctly. Binds to ribosomes in a GTP-dependent manner. The polypeptide is Elongation factor 4 (Campylobacter curvus (strain 525.92)).